Here is a 512-residue protein sequence, read N- to C-terminus: Intermediate filament family orphan 2 (512 aa).

One can recognise an IF rod domain in the interval 50–479 (NIHLLKGLNV…RLIKGSADRN (430 aa)). The interval 473–512 (KGSADRNSPSPSSVASSDSGSTDEIQEDLEREADVEPMVS) is disordered. Over residues 480–492 (SPSPSSVASSDSG) the composition is skewed to low complexity. Residues 496-512 (EIQEDLEREADVEPMVS) are compositionally biased toward acidic residues.

The protein belongs to the intermediate filament family.

This Mus musculus (Mouse) protein is Intermediate filament family orphan 2 (Iffo2).